We begin with the raw amino-acid sequence, 753 residues long: Pumilio homolog 23 (753 aa).

Positions 1 to 84 (MVSVGSKSLP…SEFEHQNQFV (84 aa)) are disordered. 3 stretches are compositionally biased toward basic and acidic residues: residues 23-38 (MGER…ERNK), 47-57 (GNRGFDVDSSK), and 73-84 (KHSEFEHQNQFV). 8 Pumilio repeats span residues 123 to 158 (ETRG…SFIR), 159 to 198 (NSAS…SVIE), 206 to 244 (KVIV…ELYG), 284 to 325 (GLLS…EIIP), 345 to 380 (NVAK…EMFN), 381 to 418 (KVFK…IMWE), 526 to 563 (SMKA…RLII), and 564 to 599 (KLRG…AIAS). The region spanning 322 to 675 (EIIPLILRCN…DASEDAAQEI (354 aa)) is the PUM-HD domain. Composition is skewed to basic and acidic residues over residues 677–688 (VKNTRKEIDHHP), 699–712 (HAKD…GEKR), and 719–728 (KTSEATDKPK). Positions 677–753 (VKNTRKEIDH…KNRHSNKMRI (77 aa)) are disordered. The segment covering 744-753 (KNRHSNKMRI) has biased composition (basic residues).

Its subcellular location is the nucleus. The protein resides in the nucleolus. Its function is as follows. Sequence-specific RNA-binding protein that regulates translation and mRNA stability by binding the 3'-UTR of target mRNAs. The sequence is that of Pumilio homolog 23 (APUM23) from Arabidopsis thaliana (Mouse-ear cress).